A 266-amino-acid chain; its full sequence is Protein-ADP-ribose hydrolase (266 aa).

The Macro domain maps to 74–265 (TDLKDLKPIK…LYKEAFNRDA (192 aa)). D93, I94, and N107 together coordinate ADP-D-ribose. Residues C113, H118, and C120 each contribute to the Zn(2+) site. Residues C120, I121, D122, S212, T213, G214, and F216 each contribute to the ADP-D-ribose site.

The protein belongs to the MacroD-type family. Zn-Macro subfamily. Requires Zn(2+) as cofactor.

It catalyses the reaction 4-O-(ADP-D-ribosyl)-L-aspartyl-[protein] + H2O = L-aspartyl-[protein] + ADP-D-ribose + H(+). Its function is as follows. ADP-ribosylhydrolase that specifically reverses the SirTM-mediated mono-ADP-ribosylation at an asparatate residue of GcvH-L, by releasing ADP-ribose from the target protein. May play a role in the regulation of the response to host-induced oxidative stress. The protein is Protein-ADP-ribose hydrolase of Staphylococcus aureus (strain MRSA252).